A 196-amino-acid polypeptide reads, in one-letter code: MSYYAFEGLIPVVHPTAFVHPSAVLIGDVIVGAGVYIGPLASLRGDYGRLIVQAGANIQDGCIMHGYCDTDTIVGENGHIGHGAILHGCVIGRDALVGMNSVIMDGAVIGEESIVAAMSFVKAGFRGEKRQLLMGTPARAVRSVSDDELHWKRLNTKEYQDLVGRCHASLHETQPLRQMEENRPRLQGTTDVTPKR.

Positions 173–196 (TQPLRQMEENRPRLQGTTDVTPKR) are disordered. Over residues 187–196 (QGTTDVTPKR) the composition is skewed to polar residues.

This sequence belongs to the transferase hexapeptide repeat family.

Its pathway is amine and polyamine metabolism; carnitine metabolism. Its function is as follows. Overproduction of CaiE stimulates the activity of CaiB and CaiD. The sequence is that of Carnitine operon protein CaiE from Escherichia coli O127:H6 (strain E2348/69 / EPEC).